Consider the following 489-residue polypeptide: ATP synthase subunit beta, chloroplastic (489 aa).

An ATP-binding site is contributed by 170-177 (GGAGVGKT).

This sequence belongs to the ATPase alpha/beta chains family. F-type ATPases have 2 components, CF(1) - the catalytic core - and CF(0) - the membrane proton channel. CF(1) has five subunits: alpha(3), beta(3), gamma(1), delta(1), epsilon(1). CF(0) has four main subunits: a(1), b(1), b'(1) and c(9-12).

It is found in the plastid. Its subcellular location is the chloroplast thylakoid membrane. It carries out the reaction ATP + H2O + 4 H(+)(in) = ADP + phosphate + 5 H(+)(out). Its function is as follows. Produces ATP from ADP in the presence of a proton gradient across the membrane. The catalytic sites are hosted primarily by the beta subunits. This chain is ATP synthase subunit beta, chloroplastic, found in Zygnema circumcarinatum (Green alga).